The primary structure comprises 237 residues: V-type proton ATPase subunit E3 (237 aa).

Met1 bears the N-acetylmethionine mark. Residues Gln9–Lys67 are a coiled coil.

Belongs to the V-ATPase E subunit family. V-ATPase is a heteromultimeric enzyme composed of a peripheral catalytic V1 complex (components A to H) attached to an integral membrane V0 proton pore complex (components: a, c, c'', d and e).

It is found in the vacuole membrane. In terms of biological role, subunit of the peripheral V1 complex of vacuolar ATPase essential for assembly or catalytic function. V-ATPase is responsible for acidifying a variety of intracellular compartments in eukaryotic cells. This chain is V-type proton ATPase subunit E3 (VHA-E3), found in Arabidopsis thaliana (Mouse-ear cress).